The chain runs to 396 residues: Protein GTS1 (396 aa).

Residues 14–141 (DRELKELINS…FRYDEIKPED (128 aa)) enclose the Arf-GAP domain. The C4-type zinc finger occupies 30-53 (CGECGNFYPTWCSVNLGVFLCGRC). The segment covering 148–161 (DFDGESDRFDERNR) has biased composition (basic and acidic residues). Disordered regions lie at residues 148–194 (DFDG…SGSR) and 233–266 (KSSSSRNSVSAAATTSTPPLPRRRATTSGPQPAI). A Phosphoserine modification is found at Ser153. Tyr181 bears the Phosphotyrosine mark. Ser184 and Ser187 each carry phosphoserine. One can recognise a UBA domain in the interval 193-234 (SRYSRQLAELKDMGFGDTNKNLDALSSAHGNINRAIDYLEKS). Over residues 234-249 (SSSSRNSVSAAATTST) the composition is skewed to low complexity. Ser240 carries the post-translational modification Phosphoserine. Phosphothreonine is present on Thr249.

The protein localises to the nucleus. Its function is as follows. Appears to modulate the timing of budding to obtain an appropriate cell size independent of the DNA replication cycle. Transcription factor involved in both heat resistance and flocculation. The protein is Protein GTS1 (GTS1) of Saccharomyces cerevisiae (strain ATCC 204508 / S288c) (Baker's yeast).